A 331-amino-acid polypeptide reads, in one-letter code: Probable staphylococcal-like nuclease CAN1 (331 aa).

Gly2 carries N-myristoyl glycine lipidation. Cys10 carries S-palmitoyl cysteine lipidation. The TNase-like domain maps to 136–313 (HTLPVDAKAV…QSGRKGLWAA (178 aa)). Asp149 provides a ligand contact to Ca(2+). Arg220 is an active-site residue. Asp225 is a binding site for Ca(2+). Residues Glu228 and Arg262 contribute to the active site. Residues 306 to 331 (GRKGLWAASRPQKPWEWRRDKRNGTA) form a disordered region. Over residues 318–331 (KPWEWRRDKRNGTA) the composition is skewed to basic and acidic residues.

It belongs to the thermonuclease family. The cofactor is Ca(2+).

Its subcellular location is the cell membrane. In terms of biological role, enzyme that catalyzes the hydrolysis of both DNA and RNA at the 5' position of the phosphodiester bond. The sequence is that of Probable staphylococcal-like nuclease CAN1 from Oryza sativa subsp. japonica (Rice).